A 256-amino-acid chain; its full sequence is Glucosamine-6-phosphate deaminase (256 aa).

Residue Asp68 is the Proton acceptor; for enolization step of the active site. Residue Asn137 is the For ring-opening step of the active site. His139 serves as the catalytic Proton acceptor; for ring-opening step. Glu144 acts as the For ring-opening step in catalysis.

It belongs to the glucosamine/galactosamine-6-phosphate isomerase family. NagB subfamily.

The enzyme catalyses alpha-D-glucosamine 6-phosphate + H2O = beta-D-fructose 6-phosphate + NH4(+). Its pathway is amino-sugar metabolism; N-acetylneuraminate degradation; D-fructose 6-phosphate from N-acetylneuraminate: step 5/5. Catalyzes the reversible isomerization-deamination of glucosamine 6-phosphate (GlcN6P) to form fructose 6-phosphate (Fru6P) and ammonium ion. The polypeptide is Glucosamine-6-phosphate deaminase (Mycoplasmopsis pulmonis (strain UAB CTIP) (Mycoplasma pulmonis)).